The sequence spans 184 residues: Protein GrpE (184 aa).

Positions 1 to 14 (MANEQNEQSQDLSS) are enriched in polar residues. Residues 1–35 (MANEQNEQSQDLSSEQTTQDHEQTQTEGVEQGAEI) form a disordered region.

This sequence belongs to the GrpE family. Homodimer.

The protein localises to the cytoplasm. Participates actively in the response to hyperosmotic and heat shock by preventing the aggregation of stress-denatured proteins, in association with DnaK and GrpE. It is the nucleotide exchange factor for DnaK and may function as a thermosensor. Unfolded proteins bind initially to DnaJ; upon interaction with the DnaJ-bound protein, DnaK hydrolyzes its bound ATP, resulting in the formation of a stable complex. GrpE releases ADP from DnaK; ATP binding to DnaK triggers the release of the substrate protein, thus completing the reaction cycle. Several rounds of ATP-dependent interactions between DnaJ, DnaK and GrpE are required for fully efficient folding. This is Protein GrpE from Acinetobacter baylyi (strain ATCC 33305 / BD413 / ADP1).